A 662-amino-acid polypeptide reads, in one-letter code: Acyl-coenzyme A oxidase acox-1.4 (662 aa).

FAD contacts are provided by residues 148-151, 156-157, and G190; these read YAQT and GT. Substrate contacts are provided by residues 284–287 and R294; that span reads KVNH. FAD is bound by residues R319 and 339–342; that span reads QQHR. 4 residues coordinate ATP: H341, S391, H395, and Q403. An FAD-binding site is contributed by G410. A substrate-binding site is contributed by 432 to 433; it reads YE. E433 functions as the Proton acceptor in the catalytic mechanism. E435 contacts FAD. ATP-binding positions include 526 to 529 and Y574; that span reads RASR. The Microbody targeting signal motif lies at 660-662; it reads AKL.

Belongs to the acyl-CoA oxidase family. Homodimer. The cofactor is FAD.

The protein resides in the peroxisome. The catalysed reaction is asc-C9-CoA + O2 = asc-DeltaC9-CoA + H2O2. Its pathway is lipid metabolism; peroxisomal fatty acid beta-oxidation. Its activity is regulated as follows. Activated by ATP. ATP binding leads to a conformational change that promotes FAD cofactor binding and enzyme activity. ATP binding likely occurs during acox-1.4 folding and/or dimer formation. Its function is as follows. Involved in the first step of peroxisomal beta-oxidation by catalyzing the desaturation of fatty acid-derived side chains of ascaroside pheromones, which regulates development and behavior. Specifically, shortens ascarosides with a 9-carbon side chain (asc-C9) and, in association with acox-1.1, may contribute to the shortening of ascarosides with a 11-carbon side chain (asc-C11). May contribute to the production of indol-3-carbonyl(IC)-ascarosides in association with acox-1.1 and acox-3. This is Acyl-coenzyme A oxidase acox-1.4 from Caenorhabditis elegans.